A 251-amino-acid chain; its full sequence is Electron transfer flavoprotein subunit beta, mitochondrial (251 aa).

This sequence belongs to the ETF beta-subunit/FixA family. In terms of assembly, heterodimer of an alpha and a beta subunit. FAD is required as a cofactor. AMP serves as cofactor.

The protein resides in the mitochondrion matrix. Its function is as follows. The electron transfer flavoprotein serves as a specific electron acceptor for several dehydrogenases, including five acyl-CoA dehydrogenases, glutaryl-CoA and sarcosine dehydrogenase. It transfers the electrons to the main mitochondrial respiratory chain via ETF-ubiquinone oxidoreductase (ETF dehydrogenase). Involved in leucine catabolism and in phytol degradation. The chain is Electron transfer flavoprotein subunit beta, mitochondrial (ETFB) from Arabidopsis thaliana (Mouse-ear cress).